The chain runs to 337 residues: tRNA N6-adenosine threonylcarbamoyltransferase (337 aa).

Residues H111 and H115 each contribute to the Fe cation site. Residues 134–138, D167, G180, and N272 each bind substrate; that span reads LVSGG. A Fe cation-binding site is contributed by D300.

The protein belongs to the KAE1 / TsaD family. The cofactor is Fe(2+).

Its subcellular location is the cytoplasm. It carries out the reaction L-threonylcarbamoyladenylate + adenosine(37) in tRNA = N(6)-L-threonylcarbamoyladenosine(37) in tRNA + AMP + H(+). Functionally, required for the formation of a threonylcarbamoyl group on adenosine at position 37 (t(6)A37) in tRNAs that read codons beginning with adenine. Is involved in the transfer of the threonylcarbamoyl moiety of threonylcarbamoyl-AMP (TC-AMP) to the N6 group of A37, together with TsaE and TsaB. TsaD likely plays a direct catalytic role in this reaction. The protein is tRNA N6-adenosine threonylcarbamoyltransferase of Yersinia enterocolitica serotype O:8 / biotype 1B (strain NCTC 13174 / 8081).